A 162-amino-acid polypeptide reads, in one-letter code: G/U mismatch-specific DNA glycosylase (162 aa).

This sequence belongs to the uracil-DNA glycosylase (UDG) superfamily. TDG/mug family. Binds DNA as a monomer.

Its subcellular location is the cytoplasm. It carries out the reaction Specifically hydrolyzes mismatched double-stranded DNA and polynucleotides, releasing free uracil.. Functionally, excises ethenocytosine and uracil, which can arise by alkylation or deamination of cytosine, respectively, from the corresponding mispairs with guanine in ds-DNA. It is capable of hydrolyzing the carbon-nitrogen bond between the sugar-phosphate backbone of the DNA and the mispaired base. The complementary strand guanine functions in substrate recognition. Required for DNA damage lesion repair in stationary-phase cells. The protein is G/U mismatch-specific DNA glycosylase of Serratia proteamaculans (strain 568).